A 103-amino-acid chain; its full sequence is Co-chaperonin GroES (103 aa).

It belongs to the GroES chaperonin family. Heptamer of 7 subunits arranged in a ring. Interacts with the chaperonin GroEL.

It localises to the cytoplasm. In terms of biological role, together with the chaperonin GroEL, plays an essential role in assisting protein folding. The GroEL-GroES system forms a nano-cage that allows encapsulation of the non-native substrate proteins and provides a physical environment optimized to promote and accelerate protein folding. GroES binds to the apical surface of the GroEL ring, thereby capping the opening of the GroEL channel. This is Co-chaperonin GroES from Prochlorococcus marinus (strain MIT 9312).